The chain runs to 118 residues: Non-specific lipid-transfer protein 3 (118 aa).

An N-terminal signal peptide occupies residues 1–25; that stretch reads MARAAATQLVLVAMVAAMLLVATDA. 4 disulfide bridges follow: C29-C77, C39-C54, C55-C100, and C75-C114.

The protein belongs to the plant LTP family.

Functionally, plant non-specific lipid-transfer proteins transfer phospholipids as well as galactolipids across membranes. May play a role in wax or cutin deposition in the cell walls of expanding epidermal cells and certain secretory tissues. The chain is Non-specific lipid-transfer protein 3 (LTP3) from Hordeum vulgare (Barley).